A 179-amino-acid chain; its full sequence is Inner membrane-spanning protein YciB (179 aa).

5 consecutive transmembrane segments (helical) span residues 22–42 (IYAA…YSWV), 50–70 (MALI…FFHN), 76–96 (WKVT…QWVM), 121–141 (LAWA…AFWL), and 149–169 (FKVF…GIYI).

Belongs to the YciB family.

It localises to the cell inner membrane. In terms of biological role, plays a role in cell envelope biogenesis, maintenance of cell envelope integrity and membrane homeostasis. The polypeptide is Inner membrane-spanning protein YciB (Shigella dysenteriae serotype 1 (strain Sd197)).